Here is an 813-residue protein sequence, read N- to C-terminus: G-type lectin S-receptor-like serine/threonine-protein kinase LECRK1 (813 aa).

A signal peptide spans 1–19; it reads MVALLLFPMLLQLLSPTCA. The Extracellular segment spans residues 20-466; it reads QTQKNITLGS…NRKHWVLGSS (447 aa). One can recognise a Bulb-type lectin domain in the interval 22-149; it reads QKNITLGSTL…DGTTKWQTFD (128 aa). N-linked (GlcNAc...) asparagine glycosylation is found at asparagine 24, asparagine 57, asparagine 164, asparagine 168, asparagine 219, and asparagine 242. Residues 293–346 enclose the EGF-like; atypical domain; the sequence is PQNICHAIVSDVGSGVCGFNSYCTFDGTRNQIASCQCPPWYKFFDEQKKYKGCK. Cystine bridges form between cysteine 297–cysteine 315, cysteine 309–cysteine 327, cysteine 329–cysteine 345, cysteine 391–cysteine 413, and cysteine 395–cysteine 401. The PAN domain maps to 354 to 433; the sequence is CDLEEATALA…NMADYVQRTV (80 aa). 2 N-linked (GlcNAc...) asparagine glycosylation sites follow: asparagine 407 and asparagine 441. The helical transmembrane segment at 467–487 threads the bilayer; sequence LILGTSILVNFALISIFLFGT. At 488-813 the chain is on the cytoplasmic side; it reads YCRITTKKNI…DPCSFISSLP (326 aa). Residues 523 to 797 enclose the Protein kinase domain; sequence AGFHEILGAG…KVTQMLDGAV (275 aa). ATP contacts are provided by residues 529–537 and lysine 553; that span reads LGAGASGVV. Residue aspartate 647 is the Proton acceptor of the active site.

This sequence belongs to the protein kinase superfamily. Ser/Thr protein kinase family. In terms of assembly, interacts (via kinase domain) with ADF4. In terms of tissue distribution, expressed in plumules, radicles and panicles.

It localises to the membrane. It catalyses the reaction L-seryl-[protein] + ATP = O-phospho-L-seryl-[protein] + ADP + H(+). The catalysed reaction is L-threonyl-[protein] + ATP = O-phospho-L-threonyl-[protein] + ADP + H(+). Its function is as follows. Involved in innate immunity. Required for the expression of defense-related genes PR1A, LOX2 and CHS1 upon biotic stresses. Required for basal resistance to the fungal blast (M.grisea), bacterial blight (O.oryzae pv. oryzae, Xoo) and the herbivorous insect brown planthopper (N.lugens, BPH). May be involved in several defense signaling pathways. Involved in the promotion of seed germination. Required for the expression of alpha-amylase genes during seed germination. Involved in resistance against the brown planthopper (BPH). Member of the BPH3 (BPH resistance locus 3) cluster which contains LECRK1, LECRK2 and LECRK3. This is G-type lectin S-receptor-like serine/threonine-protein kinase LECRK1 from Oryza sativa subsp. indica (Rice).